Here is a 697-residue protein sequence, read N- to C-terminus: PHD finger protein At1g33420 (697 aa).

The PHD-type zinc finger occupies 603–653 (KVDCKCGTKDDDGERMLACDGCGVWHHTRCIGINNADALPSKFLCFRCIEL).

Its subcellular location is the nucleus. This Arabidopsis thaliana (Mouse-ear cress) protein is PHD finger protein At1g33420.